Here is a 369-residue protein sequence, read N- to C-terminus: Peptide chain release factor 2 (369 aa).

Residue Gln251 is modified to N5-methylglutamine.

The protein belongs to the prokaryotic/mitochondrial release factor family. In terms of processing, methylated by PrmC. Methylation increases the termination efficiency of RF2.

It is found in the cytoplasm. Its function is as follows. Peptide chain release factor 2 directs the termination of translation in response to the peptide chain termination codons UGA and UAA. The polypeptide is Peptide chain release factor 2 (Chlamydia trachomatis serovar A (strain ATCC VR-571B / DSM 19440 / HAR-13)).